A 532-amino-acid chain; its full sequence is BTB/POZ domain-containing protein 3 (532 aa).

The interval 23 to 54 (KNRSKKSSKKTNTGGGGGGSSSSSSSSSNSKL) is disordered. Positions 43-53 (SSSSSSSSNSK) are enriched in low complexity. In terms of domain architecture, BTB spans 130 to 200 (ADVHFVVGPP…IYCDEIDLAA (71 aa)). Residues 245 to 310 (FEEPDLTQRC…NWAEVECQRQ (66 aa)) enclose the BACK domain.

In terms of tissue distribution, expressed in visual cortex. Expressed in visual cortex layer IV neurons.

It localises to the cytoplasm. Its subcellular location is the cytosol. The protein localises to the nucleus. In terms of biological role, acts as a key regulator of dendritic field orientation during development of sensory cortex. Also directs dendrites toward active axon terminals when ectopically expressed. This Mustela putorius furo (European domestic ferret) protein is BTB/POZ domain-containing protein 3 (BTBD3).